The following is a 99-amino-acid chain: uncharacterized protein (99 aa).

Positions 43-95 (ENEEIYADQVRRIKLRLRELRETYATSEDNWRELMDNLEELRDQIERLAIRGG) form a coiled coil.

This is an uncharacterized protein from Archaeoglobus fulgidus (strain ATCC 49558 / DSM 4304 / JCM 9628 / NBRC 100126 / VC-16).